A 314-amino-acid polypeptide reads, in one-letter code: Nodulation protein D 1 (314 aa).

An HTH lysR-type domain is found at 6–63; the sequence is LDLNLLVALDAVMTARNLTAAARKINLSQPAMSAAIARLRTYFRDELFTMRGRELVPT. Positions 23-42 form a DNA-binding region, H-T-H motif; sequence LTAAARKINLSQPAMSAAIA.

The protein belongs to the LysR transcriptional regulatory family.

In terms of biological role, nodD regulates the expression of the nodABCFE genes which encode other nodulation proteins. NodD is also a negative regulator of its own expression. Binds flavonoids as inducers. The sequence is that of Nodulation protein D 1 (nodD1) from Bradyrhizobium diazoefficiens (strain JCM 10833 / BCRC 13528 / IAM 13628 / NBRC 14792 / USDA 110).